The chain runs to 625 residues: tRNA uridine 5-carboxymethylaminomethyl modification enzyme MnmG (625 aa).

Residues 11–16 (GAGHAG), V123, and S178 each bind FAD. 271 to 285 (GPRYCPSIETKIVTF) is a binding site for NAD(+). Q368 contacts FAD.

Belongs to the MnmG family. In terms of assembly, homodimer. Heterotetramer of two MnmE and two MnmG subunits. The cofactor is FAD.

The protein localises to the cytoplasm. Its function is as follows. NAD-binding protein involved in the addition of a carboxymethylaminomethyl (cmnm) group at the wobble position (U34) of certain tRNAs, forming tRNA-cmnm(5)s(2)U34. This Bacteroides fragilis (strain YCH46) protein is tRNA uridine 5-carboxymethylaminomethyl modification enzyme MnmG.